Reading from the N-terminus, the 165-residue chain is Anterior gradient protein 3 (165 aa).

Positions 1–20 (MLHSALALCLLLITVSSNLA) are cleaved as a signal peptide. The Prevents secretion from ER motif lies at 162-165 (QSEL).

Belongs to the AGR family. As to quaternary structure, interacts with LYPD3 and DAG1 (alphaDAG1). In terms of tissue distribution, expressed in the ciliated cells of the airway epithelium. Not detected in the mucous cells.

It is found in the endoplasmic reticulum. It localises to the cytoplasm. Functionally, required for calcium-mediated regulation of ciliary beat frequency and mucociliary clearance in the airway. Might be involved in the regulation of intracellular calcium in tracheal epithelial cells. The sequence is that of Anterior gradient protein 3 from Mus musculus (Mouse).